We begin with the raw amino-acid sequence, 149 residues long: Calmodulin (149 aa).

A2 carries the post-translational modification N-acetylalanine. EF-hand domains follow at residues 8–43 (EQIS…LGQN), 44–79 (PTEA…KLKD), 81–116 (DTEE…LGEK), and 117–149 (LTNE…MIAK). Positions 21, 23, 25, 27, 32, 57, 59, 61, 63, 68, 94, 96, 98, 100, 105, 130, 132, 134, 136, and 141 each coordinate Ca(2+).

Belongs to the calmodulin family.

The protein localises to the cytoplasm. Its function is as follows. Calmodulin mediates the control of a large number of enzymes, ion channels and other proteins by Ca(2+). Among the enzymes to be stimulated by the calmodulin-Ca(2+) complex are a number of protein kinases and phosphatases. The chain is Calmodulin from Plasmodium falciparum (isolate 3D7).